We begin with the raw amino-acid sequence, 1114 residues long: Kinesin-like protein KIN-12B (1114 aa).

Positions 1–119 (MRSLFSSKLS…GGGGGDSGVQ (119 aa)) are disordered. Positions 98 to 107 (SAASPAPEGA) are enriched in low complexity. A Kinesin motor domain is found at 117–459 (GVQVVVRVRP…LRFAHRAKDI (343 aa)). Residue 197–204 (GQTGSGKT) coordinates ATP. Coiled-coil stretches lie at residues 772–810 (VLSA…KNQL) and 999–1043 (ELLV…DQEV). Over residues 1055–1065 (LPSNVVQSPEP) the composition is skewed to polar residues. The interval 1055-1081 (LPSNVVQSPEPSETGPARYDTGGSFGD) is disordered.

Belongs to the TRAFAC class myosin-kinesin ATPase superfamily. Kinesin family. KIN-12 subfamily.

In Oryza sativa subsp. japonica (Rice), this protein is Kinesin-like protein KIN-12B.